The chain runs to 563 residues: Arginine--tRNA ligase (563 aa).

A 'HIGH' region motif is present at residues 121–131; it reads PNIAKPFSIGH.

The protein belongs to the class-I aminoacyl-tRNA synthetase family. As to quaternary structure, monomer.

The protein localises to the cytoplasm. It carries out the reaction tRNA(Arg) + L-arginine + ATP = L-arginyl-tRNA(Arg) + AMP + diphosphate. The polypeptide is Arginine--tRNA ligase (Streptococcus pyogenes serotype M1).